The primary structure comprises 977 residues: Protein bicaudal C homolog 1 (977 aa).

A disordered region spans residues 1-43 (MASQSEPGYLAAAQSDPGSNSERSTDSPVAGSEDDLVAAAPLL). Phosphoserine is present on residues serine 27, serine 32, and serine 45. KH domains follow at residues 134–201 (RVTL…RARI) and 286–350 (PVST…RQYL). Lysine 400 carries the post-translational modification N6-acetyllysine. Over residues 590–621 (SLGEKVLSSNHGDPSMQTAGPEQASPKSNSVE) the composition is skewed to polar residues. 3 disordered regions span residues 590–622 (SLGE…SVEG), 667–702 (GTKN…GSER), and 794–848 (EGSS…KSRE). Residues serine 614 and serine 681 each carry the phosphoserine modification. Over residues 692 to 702 (LADKKAPGSER) the composition is skewed to basic and acidic residues. Low complexity predominate over residues 794–803 (EGSSLSLSRS). The SAM domain maps to 875–938 (FKGSDLPELF…LLAISELSKN (64 aa)).

The protein belongs to the BicC family. Interacts (via KH domains) with ANKS6 (via SAM domain) in an RNA-dependent manner. Interacts with ANKS3. In terms of tissue distribution, in the adult, predominantly expressed in heart and kidney. In 8 week old mice, expressed in growing primary oocytes and in the stromal cells of the theca.

The protein resides in the cytoplasm. Its function is as follows. Putative RNA-binding protein. May be involved in regulating gene expression during embryonic development. In Mus musculus (Mouse), this protein is Protein bicaudal C homolog 1 (Bicc1).